The chain runs to 832 residues: Subtilisin-like protease SBT2.1 (832 aa).

The N-terminal stretch at Met-1 to Ala-24 is a signal peptide. Positions Glu-25–Ala-138 are cleaved as a propeptide — activation peptide. N-linked (GlcNAc...) asparagine glycosylation is found at Asn-29 and Asn-73. Residues Val-36 to Glu-136 enclose the Inhibitor I9 domain. Residues Phe-145–Leu-684 form the Peptidase S8 domain. Asp-172 serves as the catalytic Charge relay system. A glycan (N-linked (GlcNAc...) asparagine) is linked at Asn-233. His-247 (charge relay system) is an active-site residue. N-linked (GlcNAc...) asparagine glycans are attached at residues Asn-272, Asn-315, Asn-390, Asn-417, Asn-470, Asn-515, and Asn-522. The region spanning Leu-408–Ser-503 is the PA domain. Ser-609 serves as the catalytic Charge relay system. 6 N-linked (GlcNAc...) asparagine glycosylation sites follow: Asn-679, Asn-705, Asn-713, Asn-723, Asn-760, and Asn-801.

It belongs to the peptidase S8 family.

The protein resides in the secreted. This is Subtilisin-like protease SBT2.1 from Arabidopsis thaliana (Mouse-ear cress).